Consider the following 242-residue polypeptide: Venom nerve growth factor 3 (242 aa).

Residues Met-1–Ala-18 form the signal peptide. Positions Ala-19–Arg-125 are excised as a propeptide. Residues His-45–Pro-69 are disordered. The segment covering Glu-46–Asp-66 has biased composition (basic and acidic residues). Intrachain disulfides connect Cys-139-Cys-203, Cys-181-Cys-231, and Cys-191-Cys-233.

The protein belongs to the NGF-beta family. As to quaternary structure, homodimer; non-covalently linked. As to expression, expressed by the venom gland.

It is found in the secreted. In terms of biological role, nerve growth factor is important for the development and maintenance of the sympathetic and sensory nervous systems. It stimulates division and differentiation of sympathetic and embryonic sensory neurons as well as basal forebrain cholinergic neurons in the brain. Its relevance in the snake venom is not clear. However, it has been shown to inhibit metalloproteinase-dependent proteolysis of platelet glycoprotein Ib alpha, suggesting a metalloproteinase inhibition to prevent metalloprotease autodigestion and/or protection against prey proteases. Binds a lipid between the two protein chains in the homodimer. The lipid-bound form promotes histamine relase from mouse mast cells, contrary to the lipid-free form. The sequence is that of Venom nerve growth factor 3 from Pseudechis australis (Mulga snake).